Here is a 296-residue protein sequence, read N- to C-terminus: Nucleotide-binding protein str0831 (296 aa).

Position 13–20 (13–20 (GMSGAGKT)) interacts with ATP. 63–66 (DMRS) lines the GTP pocket.

The protein belongs to the RapZ-like family.

Functionally, displays ATPase and GTPase activities. The chain is Nucleotide-binding protein str0831 from Streptococcus thermophilus (strain CNRZ 1066).